The chain runs to 258 residues: 1-(5-phosphoribosyl)-5-[(5-phosphoribosylamino)methylideneamino] imidazole-4-carboxamide isomerase 2 (258 aa).

Aspartate 14 (proton acceptor) is an active-site residue. Aspartate 140 functions as the Proton donor in the catalytic mechanism.

This sequence belongs to the HisA/HisF family.

It localises to the cytoplasm. It carries out the reaction 1-(5-phospho-beta-D-ribosyl)-5-[(5-phospho-beta-D-ribosylamino)methylideneamino]imidazole-4-carboxamide = 5-[(5-phospho-1-deoxy-D-ribulos-1-ylimino)methylamino]-1-(5-phospho-beta-D-ribosyl)imidazole-4-carboxamide. It participates in amino-acid biosynthesis; L-histidine biosynthesis; L-histidine from 5-phospho-alpha-D-ribose 1-diphosphate: step 4/9. This is 1-(5-phosphoribosyl)-5-[(5-phosphoribosylamino)methylideneamino] imidazole-4-carboxamide isomerase 2 (hisA2) from Photorhabdus laumondii subsp. laumondii (strain DSM 15139 / CIP 105565 / TT01) (Photorhabdus luminescens subsp. laumondii).